The primary structure comprises 23 residues: AAPKAPADGLKMDKTKQXVVFNH.

Residues 1–23 form a disordered region; it reads AAPKAPADGLKMDKTKQXVVFNH. His-23 is a binding site for heme.

In terms of processing, binds 4 heme groups per subunit.

It is found in the periplasm. In terms of biological role, participates in sulfate respiration coupled with phosphorylation by transferring electrons from the enzyme dehydrogenase to ferredoxin. In Nitratidesulfovibrio vulgaris (Desulfovibrio vulgaris), this protein is Cytochrome c3-1.